The following is a 179-amino-acid chain: Large ribosomal subunit protein uL5 (179 aa).

This sequence belongs to the universal ribosomal protein uL5 family. Part of the 50S ribosomal subunit; part of the 5S rRNA/L5/L18/L25 subcomplex. Contacts the 5S rRNA and the P site tRNA. Forms a bridge to the 30S subunit in the 70S ribosome.

This is one of the proteins that bind and probably mediate the attachment of the 5S RNA into the large ribosomal subunit, where it forms part of the central protuberance. In the 70S ribosome it contacts protein S13 of the 30S subunit (bridge B1b), connecting the 2 subunits; this bridge is implicated in subunit movement. Contacts the P site tRNA; the 5S rRNA and some of its associated proteins might help stabilize positioning of ribosome-bound tRNAs. This is Large ribosomal subunit protein uL5 from Synechococcus sp. (strain CC9311).